We begin with the raw amino-acid sequence, 120 residues long: ATP-dependent Clp protease adapter protein ClpS (120 aa).

Belongs to the ClpS family. Binds to the N-terminal domain of the chaperone ClpA.

Functionally, involved in the modulation of the specificity of the ClpAP-mediated ATP-dependent protein degradation. This Pseudomonas syringae pv. syringae (strain B728a) protein is ATP-dependent Clp protease adapter protein ClpS.